The chain runs to 287 residues: Pyridoxal kinase PdxY (287 aa).

Residues serine 10 and 45–46 (TQ) each bind substrate. ATP-binding positions include aspartate 112, alanine 144, glutamate 149, lysine 182, and 209–212 (RPLV). Aspartate 224 serves as a coordination point for substrate.

Belongs to the pyridoxine kinase family. PdxY subfamily. As to quaternary structure, homodimer. Mg(2+) is required as a cofactor.

The enzyme catalyses pyridoxal + ATP = pyridoxal 5'-phosphate + ADP + H(+). It functions in the pathway cofactor metabolism; pyridoxal 5'-phosphate salvage; pyridoxal 5'-phosphate from pyridoxal: step 1/1. Functionally, pyridoxal kinase involved in the salvage pathway of pyridoxal 5'-phosphate (PLP). Catalyzes the phosphorylation of pyridoxal to PLP. The sequence is that of Pyridoxal kinase PdxY from Shigella boydii serotype 4 (strain Sb227).